Here is an 87-residue protein sequence, read N- to C-terminus: Mu-theraphotoxin-Hs1a (87 aa).

The first 24 residues, 1–24 (MVNMKASMFLTFAGLVLLFVVCYA), serve as a signal peptide directing secretion. A propeptide spanning residues 25–52 (SESEEKEFPKEMLSSIFAVDNDFKQEER) is cleaved from the precursor. Cystine bridges form between C54-C67, C61-C72, and C66-C79.

It belongs to the neurotoxin 10 (Hwtx-1) family. 51 (Hntx-8) subfamily. Hntx-8 sub-subfamily. In terms of tissue distribution, expressed by the venom gland.

The protein resides in the secreted. Probable sodium channel pore blocker that dose-dependently inhibits voltage-gated sodium channels (VGSC) on DUM neurons in a way similar to tetrodotoxin. Has no effect on the kinetics of activation and inactivation. Seems not to interact with VGSC in an inactivated state. In vivo, reversibly paralyzes cockroaches, and can enhance the muscular contraction elicited by stimulating its nerve. The chain is Mu-theraphotoxin-Hs1a from Cyriopagopus schmidti (Chinese bird spider).